A 370-amino-acid chain; its full sequence is Putative agmatine deiminase (370 aa).

Residues 1–19 (MTNMNVDATQLTTKPSQDG) are compositionally biased toward polar residues. Positions 1 to 20 (MTNMNVDATQLTTKPSQDGF) are disordered. Cys-361 acts as the Amidino-cysteine intermediate in catalysis.

This sequence belongs to the agmatine deiminase family.

It catalyses the reaction agmatine + H2O = N-carbamoylputrescine + NH4(+). The protein is Putative agmatine deiminase of Shewanella frigidimarina (strain NCIMB 400).